The following is a 553-amino-acid chain: Glutamine--tRNA ligase (553 aa).

Residues 34-44 carry the 'HIGH' region motif; sequence PEPNGYLHIGH. Residues 35-37 and 41-47 each bind ATP; these read EPN and HIGHAKS. Residues aspartate 68 and tyrosine 213 each contribute to the L-glutamine site. Residues threonine 232 and 262–263 each bind ATP; that span reads RL. A 'KMSKS' region motif is present at residues 269 to 273; that stretch reads LTSKR.

The protein belongs to the class-I aminoacyl-tRNA synthetase family. Monomer.

Its subcellular location is the cytoplasm. The catalysed reaction is tRNA(Gln) + L-glutamine + ATP = L-glutaminyl-tRNA(Gln) + AMP + diphosphate. The polypeptide is Glutamine--tRNA ligase (Psychromonas ingrahamii (strain DSM 17664 / CCUG 51855 / 37)).